We begin with the raw amino-acid sequence, 334 residues long: Inositol 2-dehydrogenase (334 aa).

The protein belongs to the Gfo/Idh/MocA family. In terms of assembly, homotetramer.

The enzyme catalyses myo-inositol + NAD(+) = scyllo-inosose + NADH + H(+). Its function is as follows. Involved in the oxidation of myo-inositol (MI) to 2-keto-myo-inositol (2KMI or 2-inosose). In Cereibacter sphaeroides (strain ATCC 17023 / DSM 158 / JCM 6121 / CCUG 31486 / LMG 2827 / NBRC 12203 / NCIMB 8253 / ATH 2.4.1.) (Rhodobacter sphaeroides), this protein is Inositol 2-dehydrogenase.